A 97-amino-acid polypeptide reads, in one-letter code: Mapk-regulated corepressor-interacting protein 1 (97 aa).

The span at 1 to 26 (MTSSSTPRMHTYKRTSSPRSPTNTGE) shows a compositional bias: polar residues. Disordered stretches follow at residues 1 to 27 (MTSS…TGEL) and 54 to 97 (QNHE…SKKS). 2 stretches are compositionally biased toward basic and acidic residues: residues 54-68 (QNHE…EYVE) and 84-97 (SDLK…SKKS). The short motif at 80 to 84 (PVDLS) is the PXDLS motif element.

Belongs to the MCRIP family.

The protein localises to the nucleus. It localises to the cytoplasm. It is found in the stress granule. May play a role in the regulation of the epithelial-mesenchymal transition. This chain is Mapk-regulated corepressor-interacting protein 1 (mcrip1), found in Danio rerio (Zebrafish).